Consider the following 30-residue polypeptide: Protein Tat (30 aa).

Positions 1–30 (PLPTTRGNPTGPKESKKEVESKTETDPFAW) are disordered. The short motif at 6–8 (RGN) is the Cell attachment site element. Residues 13 to 30 (KESKKEVESKTETDPFAW) show a composition bias toward basic and acidic residues.

It belongs to the lentiviruses Tat family. In terms of assembly, interacts with host CCNT1. Associates with the P-TEFb complex composed at least of Tat, P-TEFb (CDK9 and CCNT1), TAR RNA, RNA Pol II. Recruits the HATs CREBBP, TAF1/TFIID, EP300, PCAF and GCN5L2. Interacts with host KAT5/Tip60; this interaction targets the latter to degradation. Interacts with the host deacetylase SIRT1. Interacts with host capping enzyme RNGTT; this interaction stimulates RNGTT. Binds to host KDR, and to the host integrins ITGAV/ITGB3 and ITGA5/ITGB1. Interacts with host KPNB1/importin beta-1 without previous binding to KPNA1/importin alpha-1. Interacts with EIF2AK2. Interacts with host nucleosome assembly protein NAP1L1; this interaction may be required for the transport of Tat within the nucleus, since the two proteins interact at the nuclear rim. Interacts with host C1QBP/SF2P32; this interaction involves lysine-acetylated Tat. Interacts with the host chemokine receptors CCR2, CCR3 and CXCR4. Interacts with host DPP4/CD26; this interaction may trigger an anti-proliferative effect. Interacts with host LDLR. Interacts with the host extracellular matrix metalloproteinase MMP1. Interacts with host PRMT6; this interaction mediates Tat's methylation. Interacts with, and is ubiquitinated by MDM2/Hdm2. Interacts with host PSMC3 and HTATIP2. Interacts with STAB1; this interaction may overcome SATB1-mediated repression of IL2 and IL2RA (interleukin) in T cells by binding to the same domain than HDAC1. Interacts (when acetylated on Lys-50 and Lys-51) with human CDK13, thereby increasing HIV-1 mRNA splicing and promoting the production of the doubly spliced HIV-1 protein Nef. In terms of processing, acetylation by EP300, CREBBP, GCN5L2/GCN5 and PCAF regulates the transactivation activity of Tat. EP300-mediated acetylation of Lys-50 promotes dissociation of Tat from the TAR RNA through the competitive binding to PCAF's bromodomain. In addition, the non-acetylated Tat's N-terminus can also interact with PCAF. PCAF-mediated acetylation of Lys-28 enhances Tat's binding to CCNT1. Lys-50 is deacetylated by SIRT1. Post-translationally, phosphorylated by EIF2AK2 on serine and threonine residues adjacent to the basic region important for TAR RNA binding and function. Phosphorylation of Tat by EIF2AK2 is dependent on the prior activation of EIF2AK2 by dsRNA. Asymmetrical arginine methylation by host PRMT6 seems to diminish the transactivation capacity of Tat and affects the interaction with host CCNT1. In terms of processing, polyubiquitination by MDM2 does not target Tat to degradation, but activates its transactivation function and fosters interaction with CCNT1 and TAR RNA.

The protein localises to the host nucleus. It localises to the host nucleolus. It is found in the host cytoplasm. The protein resides in the secreted. Functionally, transcriptional activator that increases RNA Pol II processivity, thereby increasing the level of full-length viral transcripts. Recognizes a hairpin structure at the 5'-LTR of the nascent viral mRNAs referred to as the transactivation responsive RNA element (TAR) and recruits the cyclin T1-CDK9 complex (P-TEFb complex) that will in turn hyperphosphorylate the RNA polymerase II to allow efficient elongation. The CDK9 component of P-TEFb and other Tat-activated kinases hyperphosphorylate the C-terminus of RNA Pol II that becomes stabilized and much more processive. Other factors such as HTATSF1/Tat-SF1, SUPT5H/SPT5, and HTATIP2 are also important for Tat's function. Besides its effect on RNA Pol II processivity, Tat induces chromatin remodeling of proviral genes by recruiting the histone acetyltransferases (HATs) CREBBP, EP300 and PCAF to the chromatin. This also contributes to the increase in proviral transcription rate, especially when the provirus integrates in transcriptionally silent region of the host genome. To ensure maximal activation of the LTR, Tat mediates nuclear translocation of NF-kappa-B by interacting with host RELA. Through its interaction with host TBP, Tat may also modulate transcription initiation. Tat can reactivate a latently infected cell by penetrating in it and transactivating its LTR promoter. In the cytoplasm, Tat is thought to act as a translational activator of HIV-1 mRNAs. Its function is as follows. Extracellular circulating Tat can be endocytosed by surrounding uninfected cells via the binding to several surface receptors such as CD26, CXCR4, heparan sulfate proteoglycans (HSPG) or LDLR. Neurons are rarely infected, but they internalize Tat via their LDLR. Endosomal low pH allows Tat to cross the endosome membrane to enter the cytosol and eventually further translocate into the nucleus, thereby inducing severe cell dysfunctions ranging from cell activation to cell death. Through its interaction with nuclear HATs, Tat is potentially able to control the acetylation-dependent cellular gene expression. Tat seems to inhibit the HAT activity of KAT5/Tip60 and TAF1, and consequently modify the expression of specific cellular genes. Modulates the expression of many cellular genes involved in cell survival, proliferation or in coding for cytokines (such as IL10) or cytokine receptors. May be involved in the derepression of host interleukin IL2 expression. Mediates the activation of cyclin-dependent kinases and dysregulation of microtubule network. Tat plays a role in T-cell and neurons apoptosis. Tat induced neurotoxicity and apoptosis probably contribute to neuroAIDS. Host extracellular matrix metalloproteinase MMP1 cleaves Tat and decreases Tat's mediated neurotoxicity. Circulating Tat also acts as a chemokine-like and/or growth factor-like molecule that binds to specific receptors on the surface of the cells, affecting many cellular pathways. In the vascular system, Tat binds to ITGAV/ITGB3 and ITGA5/ITGB1 integrins dimers at the surface of endothelial cells and competes with bFGF for heparin-binding sites, leading to an excess of soluble bFGF. Binds to KDR/VEGFR-2. All these Tat-mediated effects enhance angiogenesis in Kaposi's sarcoma lesions. The chain is Protein Tat from Human immunodeficiency virus type 1 group M subtype A (isolate Z321) (HIV-1).